The sequence spans 121 residues: MSEHRQALGRYGEELAVKHIRQAGLTVLECNYRCPLGEMDIIAREGETIIFIEVRTRSTGSRGWGEESITAKKRERLYRIATHYLKYRNYKEWPSLRFDLIAIRCQDQEGKQPDIIWIRGI.

It belongs to the UPF0102 family.

In Desulfitobacterium hafniense (strain Y51), this protein is UPF0102 protein DSY2577.